Reading from the N-terminus, the 629-residue chain is Phosphomethylpyrimidine synthase (629 aa).

A compositionally biased stretch (polar residues) spans 1-13; the sequence is MTTKSKNAINLSD. A disordered region spans residues 1–22; sequence MTTKSKNAINLSDSAKVDEQSV. Residues N233, M262, Y291, H327, 347–349, 388–391, and E427 contribute to the substrate site; these read SRG and DGLR. H431 lines the Zn(2+) pocket. Y454 contributes to the substrate binding site. H495 is a binding site for Zn(2+). The [4Fe-4S] cluster site is built by C575, C578, and C583.

Belongs to the ThiC family. As to quaternary structure, homodimer. [4Fe-4S] cluster is required as a cofactor.

It catalyses the reaction 5-amino-1-(5-phospho-beta-D-ribosyl)imidazole + S-adenosyl-L-methionine = 4-amino-2-methyl-5-(phosphooxymethyl)pyrimidine + CO + 5'-deoxyadenosine + formate + L-methionine + 3 H(+). The protein operates within cofactor biosynthesis; thiamine diphosphate biosynthesis. Functionally, catalyzes the synthesis of the hydroxymethylpyrimidine phosphate (HMP-P) moiety of thiamine from aminoimidazole ribotide (AIR) in a radical S-adenosyl-L-methionine (SAM)-dependent reaction. This chain is Phosphomethylpyrimidine synthase, found in Pseudomonas fluorescens (strain Pf0-1).